A 192-amino-acid polypeptide reads, in one-letter code: Peptidyl-tRNA hydrolase (192 aa).

TRNA is bound at residue tyrosine 18. The active-site Proton acceptor is histidine 23. TRNA contacts are provided by phenylalanine 69, asparagine 71, and asparagine 117.

The protein belongs to the PTH family. As to quaternary structure, monomer.

It localises to the cytoplasm. It carries out the reaction an N-acyl-L-alpha-aminoacyl-tRNA + H2O = an N-acyl-L-amino acid + a tRNA + H(+). Functionally, hydrolyzes ribosome-free peptidyl-tRNAs (with 1 or more amino acids incorporated), which drop off the ribosome during protein synthesis, or as a result of ribosome stalling. Catalyzes the release of premature peptidyl moieties from peptidyl-tRNA molecules trapped in stalled 50S ribosomal subunits, and thus maintains levels of free tRNAs and 50S ribosomes. This Neisseria meningitidis serogroup C (strain 053442) protein is Peptidyl-tRNA hydrolase.